A 123-amino-acid chain; its full sequence is Histone H2B (123 aa).

The tract at residues 1–32 (MAPKAPGKGAKKAAKSKAPRAPGDRKRKRTRR) is disordered. Residues 9-18 (GAKKAAKSKA) show a composition bias toward basic residues. Ser110 carries O-linked (GlcNAc) serine glycosylation. A Glycyl lysine isopeptide (Lys-Gly) (interchain with G-Cter in ubiquitin) cross-link involves residue Lys118.

The protein belongs to the histone H2B family. In terms of assembly, the nucleosome is a histone octamer containing two molecules each of H2A, H2B, H3 and H4 assembled in one H3-H4 heterotetramer and two H2A-H2B heterodimers. The octamer wraps approximately 147 bp of DNA. In terms of processing, monoubiquitination of Lys-118 gives a specific tag for epigenetic transcriptional activation and is also prerequisite for histone H3 'Lys-4' and 'Lys-79' methylation. GlcNAcylation at Ser-110 promotes monoubiquitination of Lys-118. It fluctuates in response to extracellular glucose, and associates with transcribed genes.

Its subcellular location is the nucleus. The protein resides in the chromosome. Its function is as follows. Core component of nucleosome. Nucleosomes wrap and compact DNA into chromatin, limiting DNA accessibility to the cellular machineries which require DNA as a template. Histones thereby play a central role in transcription regulation, DNA repair, DNA replication and chromosomal stability. DNA accessibility is regulated via a complex set of post-translational modifications of histones, also called histone code, and nucleosome remodeling. The protein is Histone H2B of Holothuria tubulosa (Tubular sea cucumber).